A 296-amino-acid chain; its full sequence is Nucleotide-binding protein SPT_1506 (296 aa).

13 to 20 (GMSGAGKT) is a binding site for ATP. 63-66 (DMRS) contacts GTP.

The protein belongs to the RapZ-like family.

Functionally, displays ATPase and GTPase activities. The protein is Nucleotide-binding protein SPT_1506 of Streptococcus pneumoniae (strain Taiwan19F-14).